A 432-amino-acid chain; its full sequence is Serine hydroxymethyltransferase 1 (432 aa).

(6S)-5,6,7,8-tetrahydrofolate-binding positions include L131 and 135 to 137; that span reads GHL. An N6-(pyridoxal phosphate)lysine modification is found at K240.

The protein belongs to the SHMT family. As to quaternary structure, homodimer. It depends on pyridoxal 5'-phosphate as a cofactor.

The protein resides in the cytoplasm. It catalyses the reaction (6R)-5,10-methylene-5,6,7,8-tetrahydrofolate + glycine + H2O = (6S)-5,6,7,8-tetrahydrofolate + L-serine. It participates in one-carbon metabolism; tetrahydrofolate interconversion. It functions in the pathway amino-acid biosynthesis; glycine biosynthesis; glycine from L-serine: step 1/1. In terms of biological role, catalyzes the reversible interconversion of serine and glycine with tetrahydrofolate (THF) serving as the one-carbon carrier. This reaction serves as the major source of one-carbon groups required for the biosynthesis of purines, thymidylate, methionine, and other important biomolecules. Also exhibits THF-independent aldolase activity toward beta-hydroxyamino acids, producing glycine and aldehydes, via a retro-aldol mechanism. This chain is Serine hydroxymethyltransferase 1, found in Rhodopseudomonas palustris (strain ATCC BAA-98 / CGA009).